The chain runs to 501 residues: UPF0288 protein Maeo_0995 (501 aa).

Belongs to the UPF0288 family.

This chain is UPF0288 protein Maeo_0995, found in Methanococcus aeolicus (strain ATCC BAA-1280 / DSM 17508 / OCM 812 / Nankai-3).